We begin with the raw amino-acid sequence, 274 residues long: Undecaprenyl-diphosphatase 1 (274 aa).

7 helical membrane passes run tryptophan 8–valine 28, isoleucine 45–isoleucine 65, phenylalanine 92–phenylalanine 112, leucine 120–isoleucine 140, phenylalanine 195–isoleucine 215, isoleucine 230–methionine 250, and glycine 253–leucine 273.

The protein belongs to the UppP family.

The protein localises to the cell membrane. It carries out the reaction di-trans,octa-cis-undecaprenyl diphosphate + H2O = di-trans,octa-cis-undecaprenyl phosphate + phosphate + H(+). In terms of biological role, catalyzes the dephosphorylation of undecaprenyl diphosphate (UPP). Confers resistance to bacitracin. In Halalkalibacterium halodurans (strain ATCC BAA-125 / DSM 18197 / FERM 7344 / JCM 9153 / C-125) (Bacillus halodurans), this protein is Undecaprenyl-diphosphatase 1.